A 228-amino-acid polypeptide reads, in one-letter code: Death domain-containing membrane protein NRADD (228 aa).

At 1–52 the chain is on the extracellular side; it reads MLYNVSKGVVYSDTALQGQDGDREGMWVGAGGALAPNTSSLFPPEPPGASSN. N4 and N37 each carry an N-linked (GlcNAc...) asparagine glycan. Residues 53–73 form a helical; Signal-anchor for type III membrane protein membrane-spanning segment; the sequence is IIPVYCALLATVILGLLAYVA. Topologically, residues 74-228 are cytoplasmic; the sequence is FKCWRSHKQR…SSPAESSSVV (155 aa). A disordered region spans residues 87-122; it reads AKARTVELGDPDRDQRRGDSNVFVDSPPSLEPCIPS. The span at 90–105 shows a compositional bias: basic and acidic residues; the sequence is RTVELGDPDRDQRRGD. Positions 143–222 constitute a Death domain; that stretch reads EEVQRLLMMG…DVVQVLSSPA (80 aa).

In terms of assembly, interacts with NGFR. Interacts with NTRK1. Interacts with SORT1. In terms of tissue distribution, detected in lung and testis.

It is found in the cell membrane. The protein resides in the nucleus. In terms of biological role, modulates NTRK1 signaling. Can activate several intracellular signaling pathways, leading to activation of JUN. Promotes apoptosis. Promotes translocation of SORT1 to the cell membrane, and thereby hinders lysosomal degradation of SOTR1 and promotes its interaction with NGFR. The sequence is that of Death domain-containing membrane protein NRADD (Nradd) from Mus musculus (Mouse).